The chain runs to 85 residues: uncharacterized protein (85 aa).

Positions Met-1 to Arg-85 are disordered. The span at Ala-47–Gly-61 shows a compositional bias: basic and acidic residues.

This is an uncharacterized protein from Streptomyces lividans.